Here is a 183-residue protein sequence, read N- to C-terminus: Ribulose bisphosphate carboxylase small subunit, chloroplastic 1 (183 aa).

The N-terminal 58 residues, 1 to 58 (MASSMLSNAAMATTAATAGAQASMVAPFNGLKSFATFPITKKSSNDFSSLPSNGGRVQ), are a transit peptide targeting the chloroplast.

Belongs to the RuBisCO small chain family. In terms of assembly, heterohexadecamer of 8 large and 8 small subunits.

It localises to the plastid. The protein resides in the chloroplast. Its function is as follows. RuBisCO catalyzes two reactions: the carboxylation of D-ribulose 1,5-bisphosphate, the primary event in carbon dioxide fixation, as well as the oxidative fragmentation of the pentose substrate. Both reactions occur simultaneously and in competition at the same active site. Although the small subunit is not catalytic it is essential for maximal activity. The protein is Ribulose bisphosphate carboxylase small subunit, chloroplastic 1 of Amaranthus hypochondriacus (Prince-of-Wales feather).